The following is a 426-amino-acid chain: D-cysteine desulfhydrase 1, mitochondrial (426 aa).

The N-terminal 63 residues, Met1–Tyr63, are a transit peptide targeting the mitochondrion. Residue Lys119 is modified to N6-(pyridoxal phosphate)lysine. Residue Ser146 is the Nucleophile of the active site.

Belongs to the ACC deaminase/D-cysteine desulfhydrase family. As to quaternary structure, homodimer. Requires pyridoxal 5'-phosphate as cofactor. As to expression, present in seeds (at protein level).

It is found in the mitochondrion. It catalyses the reaction D-cysteine + H2O = hydrogen sulfide + pyruvate + NH4(+) + H(+). With respect to regulation, inhibited by L-cysteine (L-cys). Catalyzes the production of hydrogen sulfide (H2S) from D-cysteine (D-cys). The chain is D-cysteine desulfhydrase 1, mitochondrial from Oryza sativa subsp. japonica (Rice).